Consider the following 497-residue polypeptide: uncharacterized protein (497 aa).

Positions 474–497 are disordered; that stretch reads DPRNPFSNGKPSGWSDEDVAWLKR. Positions 488 to 497 are enriched in acidic residues; it reads SDEDVAWLKR.

This is an uncharacterized protein from Bacillus anthracis.